Consider the following 427-residue polypeptide: MSDRMSLSLAQSDPDVAAAIDHEVLRQHEGLEMIASENFVSRAVLEAAGSVFTNKYAEGYPGRRYYGGCEFADVVENLARDRAKQLFGAEHANVQPHSGSQANAAAYMSIIQPGDTILGLDLAHGGHLTHGHKLNFSGKLYRVASYGVRKDTETIDYDELEAIAVREQPKMIIGGGSAYPRIFDFARMRQIADKVGAFLLVDMAHFAGLVAGGAHPSPVPHAHIVTTTTHKTLRGPRSGLILCRQEHAAAVDKSVFPGQQGGPLVHIMAAKAVAFREALQPDFSKYAQQIVDNARALAAALAGHGYRIISGGTDTHLMLIDVFAKGILGSEAEAALGKAGITVNKNAIPYDTNPPLKPSGIRIGTPALTTRGMKEAEMKQIAQWIVSALEHRNNESMLERIHGEVTEMANQFPLYGWLREDAEALAR.

Residues Leu122 and 126–128 (GHL) each bind (6S)-5,6,7,8-tetrahydrofolate. Residue Lys231 is modified to N6-(pyridoxal phosphate)lysine.

This sequence belongs to the SHMT family. Homodimer. The cofactor is pyridoxal 5'-phosphate.

It is found in the cytoplasm. It catalyses the reaction (6R)-5,10-methylene-5,6,7,8-tetrahydrofolate + glycine + H2O = (6S)-5,6,7,8-tetrahydrofolate + L-serine. It functions in the pathway one-carbon metabolism; tetrahydrofolate interconversion. It participates in amino-acid biosynthesis; glycine biosynthesis; glycine from L-serine: step 1/1. Functionally, catalyzes the reversible interconversion of serine and glycine with tetrahydrofolate (THF) serving as the one-carbon carrier. This reaction serves as the major source of one-carbon groups required for the biosynthesis of purines, thymidylate, methionine, and other important biomolecules. Also exhibits THF-independent aldolase activity toward beta-hydroxyamino acids, producing glycine and aldehydes, via a retro-aldol mechanism. The protein is Serine hydroxymethyltransferase of Acidobacterium capsulatum (strain ATCC 51196 / DSM 11244 / BCRC 80197 / JCM 7670 / NBRC 15755 / NCIMB 13165 / 161).